Consider the following 177-residue polypeptide: Large ribosomal subunit protein uL6 (177 aa).

The protein belongs to the universal ribosomal protein uL6 family. Part of the 50S ribosomal subunit.

This protein binds to the 23S rRNA, and is important in its secondary structure. It is located near the subunit interface in the base of the L7/L12 stalk, and near the tRNA binding site of the peptidyltransferase center. The sequence is that of Large ribosomal subunit protein uL6 from Nitrobacter winogradskyi (strain ATCC 25391 / DSM 10237 / CIP 104748 / NCIMB 11846 / Nb-255).